Reading from the N-terminus, the 291-residue chain is Ribosomal RNA small subunit methyltransferase I (291 aa).

Belongs to the methyltransferase superfamily. RsmI family.

The protein localises to the cytoplasm. The catalysed reaction is cytidine(1402) in 16S rRNA + S-adenosyl-L-methionine = 2'-O-methylcytidine(1402) in 16S rRNA + S-adenosyl-L-homocysteine + H(+). Catalyzes the 2'-O-methylation of the ribose of cytidine 1402 (C1402) in 16S rRNA. In Neisseria meningitidis serogroup A / serotype 4A (strain DSM 15465 / Z2491), this protein is Ribosomal RNA small subunit methyltransferase I.